The primary structure comprises 280 residues: uncharacterized protein (280 aa).

Residues 96-208 (DKSIGIFQRF…GYLSTPPPVK (113 aa)) enclose the DUF1279 domain. A helical transmembrane segment spans residues 115–135 (VMVPVHIVTSTVWFGSFYYAA). A coiled-coil region spans residues 207–274 (VKEFLQDKME…KLQETKDKMS (68 aa)). A disordered region spans residues 245–280 (SERMEETKERFSETKDKFSEKLQETKDKMSFRKKAD).

Its subcellular location is the membrane. This is an uncharacterized protein from Danio rerio (Zebrafish).